A 345-amino-acid polypeptide reads, in one-letter code: Dihydroorotase (345 aa).

Zn(2+) contacts are provided by H13 and H15. Substrate contacts are provided by residues 15 to 17 and N41; that span reads HFR. 3 residues coordinate Zn(2+): K98, H135, and H173. The residue at position 98 (K98) is an N6-carboxylysine. Residue H135 participates in substrate binding. L218 contacts substrate. D246 is a binding site for Zn(2+). Residue D246 is part of the active site. The substrate site is built by H250 and A262.

This sequence belongs to the metallo-dependent hydrolases superfamily. DHOase family. Class II DHOase subfamily. As to quaternary structure, homodimer. Zn(2+) serves as cofactor.

The enzyme catalyses (S)-dihydroorotate + H2O = N-carbamoyl-L-aspartate + H(+). It participates in pyrimidine metabolism; UMP biosynthesis via de novo pathway; (S)-dihydroorotate from bicarbonate: step 3/3. Its function is as follows. Catalyzes the reversible cyclization of carbamoyl aspartate to dihydroorotate. The polypeptide is Dihydroorotase (Shewanella pealeana (strain ATCC 700345 / ANG-SQ1)).